The sequence spans 395 residues: Cyclin-A2 (395 aa).

The tract at residues 1–93 (MLAEQENQEN…EEAADAPGLR (93 aa)) is disordered. Low complexity predominate over residues 27–60 (ALGLLRGGPARPGPAAQAARNGEGRGAAAGQQQQ).

It belongs to the cyclin family. Cyclin AB subfamily. As to quaternary structure, interacts with the CDK1 and CDK2 protein kinases to form serine/threonine kinase holoenzyme complexes.

It is found in the nucleus. Its subcellular location is the cytoplasm. Cyclin which controls both the G1/S and the G2/M transition phases of the cell cycle. Functions through the formation of specific serine/threonine kinase holoenzyme complexes with the cyclin-dependent protein kinases CDK1 and CDK2. The cyclin subunit confers the substrate specificity of these complexes and differentially interacts with and activates CDK1 and CDK2 throughout the cell cycle. The sequence is that of Cyclin-A2 from Gallus gallus (Chicken).